The primary structure comprises 116 residues: Large ribosomal subunit protein bL19 (116 aa).

Belongs to the bacterial ribosomal protein bL19 family.

Its function is as follows. This protein is located at the 30S-50S ribosomal subunit interface and may play a role in the structure and function of the aminoacyl-tRNA binding site. The chain is Large ribosomal subunit protein bL19 from Chloroflexus aurantiacus (strain ATCC 29366 / DSM 635 / J-10-fl).